The chain runs to 203 residues: Glycerol-3-phosphate acyltransferase (203 aa).

Helical transmembrane passes span 6-26, 82-102, 118-138, and 141-161; these read LTLL…AVLV, AISL…PVFF, APIG…LVLI, and YSSL…WWLD.

It belongs to the PlsY family. Probably interacts with PlsX.

It is found in the cell inner membrane. The enzyme catalyses an acyl phosphate + sn-glycerol 3-phosphate = a 1-acyl-sn-glycero-3-phosphate + phosphate. It functions in the pathway lipid metabolism; phospholipid metabolism. Functionally, catalyzes the transfer of an acyl group from acyl-phosphate (acyl-PO(4)) to glycerol-3-phosphate (G3P) to form lysophosphatidic acid (LPA). This enzyme utilizes acyl-phosphate as fatty acyl donor, but not acyl-CoA or acyl-ACP. The protein is Glycerol-3-phosphate acyltransferase of Shewanella oneidensis (strain ATCC 700550 / JCM 31522 / CIP 106686 / LMG 19005 / NCIMB 14063 / MR-1).